The sequence spans 375 residues: Growth/differentiation factor 8 (375 aa).

Positions 1 to 23 (MQKLAVYVYIYLFVQISVDPVAL) are cleaved as a signal peptide. Residues 24–266 (DGSSQPTENT…VTDTPKRSRR (243 aa)) constitute a propeptide that is removed on maturation. Asparagine 71 is a glycosylation site (N-linked (GlcNAc...) asparagine). 4 disulfides stabilise this stretch: cysteine 272/cysteine 282, cysteine 281/cysteine 340, cysteine 309/cysteine 372, and cysteine 313/cysteine 374.

It belongs to the TGF-beta family. In terms of assembly, homodimer; disulfide-linked.

The protein localises to the secreted. In terms of biological role, acts specifically as a negative regulator of skeletal muscle growth. This Excalfactoria chinensis (Blue-breasted quail) protein is Growth/differentiation factor 8 (MSTN).